Reading from the N-terminus, the 295-residue chain is Iron-sulfur cluster carrier protein (295 aa).

Residue 38 to 45 coordinates ATP; that stretch reads GKGGVGKS.

The protein belongs to the Mrp/NBP35 ATP-binding proteins family. Homodimer.

Its function is as follows. Binds and transfers iron-sulfur (Fe-S) clusters to target apoproteins. Can hydrolyze ATP. This chain is Iron-sulfur cluster carrier protein, found in Pyrococcus furiosus (strain ATCC 43587 / DSM 3638 / JCM 8422 / Vc1).